A 446-amino-acid chain; its full sequence is Tubulin beta-1 chain (446 aa).

The short motif at 1-4 (MREI) is the MREI motif element. Residues Gln-11, Glu-69, Ser-138, Gly-142, Thr-143, Gly-144, Asn-204, and Asn-226 each contribute to the GTP site. Glu-69 serves as a coordination point for Mg(2+). Residues 426 to 446 (QDATAEEEGEFEEEGEYEDGA) are disordered. Residues 429–446 (TAEEEGEFEEEGEYEDGA) are compositionally biased toward acidic residues. Glu-438 bears the 5-glutamyl polyglutamate mark.

The protein belongs to the tubulin family. Dimer of alpha and beta chains. A typical microtubule is a hollow water-filled tube with an outer diameter of 25 nm and an inner diameter of 15 nM. Alpha-beta heterodimers associate head-to-tail to form protofilaments running lengthwise along the microtubule wall with the beta-tubulin subunit facing the microtubule plus end conferring a structural polarity. Microtubules usually have 13 protofilaments but different protofilament numbers can be found in some organisms and specialized cells. The cofactor is Mg(2+). In terms of processing, some glutamate residues at the C-terminus are polyglycylated, resulting in polyglycine chains on the gamma-carboxyl group. Glycylation is mainly limited to tubulin incorporated into axonemes (cilia and flagella) whereas glutamylation is prevalent in neuronal cells, centrioles, axonemes, and the mitotic spindle. Both modifications can coexist on the same protein on adjacent residues, and lowering polyglycylation levels increases polyglutamylation, and reciprocally. The precise function of polyglycylation is still unclear. Some glutamate residues at the C-terminus are polyglutamylated, resulting in polyglutamate chains on the gamma-carboxyl group. Polyglutamylation plays a key role in microtubule severing by spastin (SPAST). SPAST preferentially recognizes and acts on microtubules decorated with short polyglutamate tails: severing activity by SPAST increases as the number of glutamates per tubulin rises from one to eight, but decreases beyond this glutamylation threshold. As to expression, brain.

It localises to the cytoplasm. It is found in the cytoskeleton. Its function is as follows. Tubulin is the major constituent of microtubules, a cylinder consisting of laterally associated linear protofilaments composed of alpha- and beta-tubulin heterodimers. Microtubules grow by the addition of GTP-tubulin dimers to the microtubule end, where a stabilizing cap forms. Below the cap, tubulin dimers are in GDP-bound state, owing to GTPase activity of alpha-tubulin. The chain is Tubulin beta-1 chain (tubb1) from Notothenia neglecta (Yellowbelly rockcod).